The following is a 427-amino-acid chain: MEDPFSLAILNPASNLSVPTQPSWSLNLTSEQGASVPGPHSPPRGPPSHRIHLVFLGIILVAAVAGNTTVLCRLCGGSSGPWPGPKRRKMDFLLVQLAAADLYASGGTALSQLAWELLGDPRPALGDLACRLSHLLQASGRGASAHLVALIALERQLAVRIPQGPQLPARALAALSWLLALLLALPPTFVVRWDAPPSSTANAWPGKHCCRGIFAPLPRWHLQVYALYEAIVGFAAPVALLGFSCGHLLCVWWQRGSQAPVARMPWSPSMARASLPSALPQAKVQSLKMSLALALLFVGCDLPYFAARLAAAWSSKPAGDWERESLVAAMRVLEVANSAINPLIYLFFQAGDCRLWRRLRRRLGVLCCVREEEADISEWAGDHQALHRHRWPHPHYHHARREERNQGCLRPPPPRPRPPPCSCESAF.

At 1–3 (MED) the chain is on the extracellular side. The helical transmembrane segment at 4–24 (PFSLAILNPASNLSVPTQPSW) threads the bilayer. Over 25 to 50 (SLNLTSEQGASVPGPHSPPRGPPSHR) the chain is Cytoplasmic. Residues 51–71 (IHLVFLGIILVAAVAGNTTVL) traverse the membrane as a helical segment. Residues 72–89 (CRLCGGSSGPWPGPKRRK) are Extracellular-facing. Residues 90 to 110 (MDFLLVQLAAADLYASGGTAL) traverse the membrane as a helical segment. The Cytoplasmic segment spans residues 111–170 (SQLAWELLGDPRPALGDLACRLSHLLQASGRGASAHLVALIALERQLAVRIPQGPQLPAR). The chain crosses the membrane as a helical span at residues 171–191 (ALAALSWLLALLLALPPTFVV). Topologically, residues 192-230 (RWDAPPSSTANAWPGKHCCRGIFAPLPRWHLQVYALYEA) are extracellular. A helical membrane pass occupies residues 231–251 (IVGFAAPVALLGFSCGHLLCV). The Cytoplasmic segment spans residues 252 to 286 (WWQRGSQAPVARMPWSPSMARASLPSALPQAKVQS). Residues 287–307 (LKMSLALALLFVGCDLPYFAA) form a helical membrane-spanning segment. Residues 308–327 (RLAAAWSSKPAGDWERESLV) are Extracellular-facing. A helical membrane pass occupies residues 328–348 (AAMRVLEVANSAINPLIYLFF). Over 349-427 (QAGDCRLWRR…PPPCSCESAF (79 aa)) the chain is Cytoplasmic. The tract at residues 402–427 (EERNQGCLRPPPPRPRPPPCSCESAF) is disordered. Residues 410 to 421 (RPPPPRPRPPPC) show a composition bias toward pro residues.

This sequence belongs to the G-protein coupled receptor 1 family.

The protein localises to the cell membrane. Its function is as follows. Orphan receptor. The chain is Probable G-protein coupled receptor 150 (Gpr150) from Mus musculus (Mouse).